Consider the following 274-residue polypeptide: Elongation factor Ts (274 aa).

Positions 79 to 82 (TDFV) are involved in Mg(2+) ion dislocation from EF-Tu.

This sequence belongs to the EF-Ts family.

The protein resides in the cytoplasm. In terms of biological role, associates with the EF-Tu.GDP complex and induces the exchange of GDP to GTP. It remains bound to the aminoacyl-tRNA.EF-Tu.GTP complex up to the GTP hydrolysis stage on the ribosome. The protein is Elongation factor Ts of Azobacteroides pseudotrichonymphae genomovar. CFP2.